Consider the following 347-residue polypeptide: Holliday junction branch migration complex subunit RuvB (347 aa).

The large ATPase domain (RuvB-L) stretch occupies residues 1–186; it reads MKDENSINFL…FGITARFELY (186 aa). Residues Leu-25, Arg-26, Gly-67, Lys-70, Thr-71, Thr-72, 133–135, Arg-176, Tyr-186, and Arg-223 contribute to the ATP site; that span reads EDY. Thr-71 serves as a coordination point for Mg(2+). The tract at residues 187 to 257 is small ATPAse domain (RuvB-S); that stretch reads SEIELVEIIK…IVSIGLEMLR (71 aa). The head domain (RuvB-H) stretch occupies residues 260–347; the sequence is GEGLDEQDRN…DISENQRVSF (88 aa). The DNA site is built by Arg-315 and Arg-320.

This sequence belongs to the RuvB family. In terms of assembly, homohexamer. Forms an RuvA(8)-RuvB(12)-Holliday junction (HJ) complex. HJ DNA is sandwiched between 2 RuvA tetramers; dsDNA enters through RuvA and exits via RuvB. An RuvB hexamer assembles on each DNA strand where it exits the tetramer. Each RuvB hexamer is contacted by two RuvA subunits (via domain III) on 2 adjacent RuvB subunits; this complex drives branch migration. In the full resolvosome a probable DNA-RuvA(4)-RuvB(12)-RuvC(2) complex forms which resolves the HJ.

The protein localises to the cytoplasm. The enzyme catalyses ATP + H2O = ADP + phosphate + H(+). Functionally, the RuvA-RuvB-RuvC complex processes Holliday junction (HJ) DNA during genetic recombination and DNA repair, while the RuvA-RuvB complex plays an important role in the rescue of blocked DNA replication forks via replication fork reversal (RFR). RuvA specifically binds to HJ cruciform DNA, conferring on it an open structure. The RuvB hexamer acts as an ATP-dependent pump, pulling dsDNA into and through the RuvAB complex. RuvB forms 2 homohexamers on either side of HJ DNA bound by 1 or 2 RuvA tetramers; 4 subunits per hexamer contact DNA at a time. Coordinated motions by a converter formed by DNA-disengaged RuvB subunits stimulates ATP hydrolysis and nucleotide exchange. Immobilization of the converter enables RuvB to convert the ATP-contained energy into a lever motion, pulling 2 nucleotides of DNA out of the RuvA tetramer per ATP hydrolyzed, thus driving DNA branch migration. The RuvB motors rotate together with the DNA substrate, which together with the progressing nucleotide cycle form the mechanistic basis for DNA recombination by continuous HJ branch migration. Branch migration allows RuvC to scan DNA until it finds its consensus sequence, where it cleaves and resolves cruciform DNA. The protein is Holliday junction branch migration complex subunit RuvB of Borrelia garinii subsp. bavariensis (strain ATCC BAA-2496 / DSM 23469 / PBi) (Borreliella bavariensis).